A 173-amino-acid chain; its full sequence is uncharacterized protein (173 aa).

Transmembrane regions (helical) follow at residues 24–44 (VAFI…WLFF), 82–102 (YILF…SYFI), and 135–155 (LIKR…ILFS).

It is found in the cell membrane. This is an uncharacterized protein from Rickettsia prowazekii (strain Madrid E).